The following is a 700-amino-acid chain: Putative proline-rich receptor-like protein kinase PERK6 (700 aa).

Positions methionine 1–asparagine 180 are disordered. The Extracellular portion of the chain corresponds to methionine 1–alanine 186. Composition is skewed to pro residues over residues asparagine 9–proline 19 and serine 29–aspartate 47. Residues aspartate 48–asparagine 137 are compositionally biased toward low complexity. A glycan (N-linked (GlcNAc...) asparagine) is linked at asparagine 176. Residues alanine 187–valine 207 form a helical membrane-spanning segment. The Cytoplasmic segment spans residues cysteine 208–histidine 700. The segment at asparagine 249–serine 315 is disordered. The segment covering proline 255–asparagine 265 has biased composition (low complexity). The segment covering serine 266–valine 286 has biased composition (pro residues). Residue threonine 326 is modified to Phosphothreonine. The 279-residue stretch at phenylalanine 337–leucine 615 folds into the Protein kinase domain. ATP-binding positions include leucine 343–valine 351 and lysine 365. A Phosphotyrosine modification is found at tyrosine 410. The active-site Proton acceptor is aspartate 461. Phosphoserine is present on residues serine 465 and serine 494. A phosphothreonine mark is found at threonine 495 and threonine 500. Tyrosine 508 bears the Phosphotyrosine mark. 2 disordered regions span residues aspartate 616 to threonine 642 and glutamate 659 to histidine 700. Polar residues predominate over residues alanine 689–histidine 700.

Belongs to the protein kinase superfamily. Ser/Thr protein kinase family. In terms of tissue distribution, mostly expressed in flower buds.

Its subcellular location is the cell membrane. The enzyme catalyses L-seryl-[protein] + ATP = O-phospho-L-seryl-[protein] + ADP + H(+). It carries out the reaction L-threonyl-[protein] + ATP = O-phospho-L-threonyl-[protein] + ADP + H(+). In Arabidopsis thaliana (Mouse-ear cress), this protein is Putative proline-rich receptor-like protein kinase PERK6 (PERK6).